The following is a 29-amino-acid chain: Cyclotide cter-K (29 aa).

Residues 1–29 (HEPCGESCVFIPCITTVVGCSCKNKVCYN) constitute a cross-link (cyclopeptide (His-Asn)). Disulfide bonds link Cys-4/Cys-20, Cys-8/Cys-22, and Cys-13/Cys-27.

In terms of processing, contains 3 disulfide bonds. This is a cyclic peptide.

Its function is as follows. Probably participates in a plant defense mechanism. This is Cyclotide cter-K from Clitoria ternatea (Butterfly pea).